Consider the following 277-residue polypeptide: Large ribosomal subunit protein uL2 (277 aa).

The tract at residues 219-277 (TVRGSVMNPNDHPHGGGEGRSPIGHPSPRTPWGKPALGYKTRKNKKYSDRFIVKRRHDK) is disordered.

It belongs to the universal ribosomal protein uL2 family. In terms of assembly, part of the 50S ribosomal subunit. Forms a bridge to the 30S subunit in the 70S ribosome.

Its function is as follows. One of the primary rRNA binding proteins. Required for association of the 30S and 50S subunits to form the 70S ribosome, for tRNA binding and peptide bond formation. It has been suggested to have peptidyltransferase activity; this is somewhat controversial. Makes several contacts with the 16S rRNA in the 70S ribosome. This chain is Large ribosomal subunit protein uL2, found in Clostridium botulinum (strain 657 / Type Ba4).